The following is a 101-amino-acid chain: Small ribosomal subunit protein uS14 (101 aa).

The protein belongs to the universal ribosomal protein uS14 family. As to quaternary structure, part of the 30S ribosomal subunit. Contacts proteins S3 and S10.

In terms of biological role, binds 16S rRNA, required for the assembly of 30S particles and may also be responsible for determining the conformation of the 16S rRNA at the A site. In Saccharophagus degradans (strain 2-40 / ATCC 43961 / DSM 17024), this protein is Small ribosomal subunit protein uS14.